We begin with the raw amino-acid sequence, 417 residues long: NADH-quinone oxidoreductase subunit D (417 aa).

Belongs to the complex I 49 kDa subunit family. NDH-1 is composed of 14 different subunits. Subunits NuoB, C, D, E, F, and G constitute the peripheral sector of the complex.

The protein resides in the cell inner membrane. It catalyses the reaction a quinone + NADH + 5 H(+)(in) = a quinol + NAD(+) + 4 H(+)(out). In terms of biological role, NDH-1 shuttles electrons from NADH, via FMN and iron-sulfur (Fe-S) centers, to quinones in the respiratory chain. The immediate electron acceptor for the enzyme in this species is believed to be ubiquinone. Couples the redox reaction to proton translocation (for every two electrons transferred, four hydrogen ions are translocated across the cytoplasmic membrane), and thus conserves the redox energy in a proton gradient. The polypeptide is NADH-quinone oxidoreductase subunit D (Alkalilimnicola ehrlichii (strain ATCC BAA-1101 / DSM 17681 / MLHE-1)).